The primary structure comprises 209 residues: Hyperpolarization-activated voltage-gated potassium channel (209 aa).

Over 1 to 10 (MNLKDRRLKK) the chain is Cytoplasmic. The helical transmembrane segment at 11–31 (IMEVLSLIFTFEIVASFILST) threads the bilayer. The Extracellular portion of the chain corresponds to 32–38 (YNPPYQD). A helical membrane pass occupies residues 39-59 (LLIKLDYISIMFFTFEFIYNF). Over 60 to 71 (YYVEDKAKFFKD) the chain is Cytoplasmic. The helical transmembrane segment at 72 to 92 (IYNIVDAIVVIAFLLYSLQVF) threads the bilayer. Over 93–96 (YSKA) the chain is Extracellular. Residues 97 to 117 (FLGLRVINLLRILVLLRIIKL) form a helical; Voltage-sensor membrane-spanning segment. Residues 118 to 125 (RKLEENQA) lie on the Cytoplasmic side of the membrane. The helical transmembrane segment at 126–146 (LINFLTLLTICFIASCLIWIV) threads the bilayer. Residues 147–181 (ESGVNPAINNFFDAFYFTTISITTVGYGDITPKTD) are Extracellular-facing. Positions 170-175 (TVGYGD) match the Selectivity filter motif. Residues 182–202 (AGKLIIIFSVLFFISGLITSL) form a helical membrane-spanning segment. Topologically, residues 203 to 209 (QKALKGD) are cytoplasmic.

This sequence belongs to the potassium channel family. Homotetramer.

The protein localises to the cell membrane. Functionally, voltage-gated potassium-selective channel opened by hyperpolarization. This chain is Hyperpolarization-activated voltage-gated potassium channel (mvp), found in Methanocaldococcus jannaschii (strain ATCC 43067 / DSM 2661 / JAL-1 / JCM 10045 / NBRC 100440) (Methanococcus jannaschii).